Consider the following 699-residue polypeptide: Polyribonucleotide nucleotidyltransferase (699 aa).

Positions 485 and 491 each coordinate Mg(2+). Residues 552 to 611 (PRITTIKINPEKIRDVIGKGGAVIRALTEETGTTIELEDDGTVKIASSNGEATKEAIRRI) enclose the KH domain. Positions 621-689 (GRIYNGKVIR…RQGRVRLSIK (69 aa)) constitute an S1 motif domain.

It belongs to the polyribonucleotide nucleotidyltransferase family. Component of the RNA degradosome, which is a multiprotein complex involved in RNA processing and mRNA degradation. The cofactor is Mg(2+).

Its subcellular location is the cytoplasm. The enzyme catalyses RNA(n+1) + phosphate = RNA(n) + a ribonucleoside 5'-diphosphate. Its function is as follows. Involved in mRNA degradation. Catalyzes the phosphorolysis of single-stranded polyribonucleotides processively in the 3'- to 5'-direction. This chain is Polyribonucleotide nucleotidyltransferase, found in Shewanella sp. (strain MR-7).